The chain runs to 203 residues: MTGRWSPRLLAGLLAALVLSGCALLVPEDEREAQYEAFLEERAELRDWSVAGRAALRAEGEAVSLSLRWEQRGEVYTINLSGPFGAGAVRIEGQPGRVTLRDGAGQSATAQSPEELLAAQTGHQLPVTALRDWIVGRPADGLEVDELSLDRVGRPDRLEQAGWRVDFQGWTDVDGVDLPSRVDLTRGSTQMRVALSGWSRSDD.

A signal peptide spans 1-21; it reads MTGRWSPRLLAGLLAALVLSG. Cys22 carries the N-palmitoyl cysteine lipid modification. Cys22 carries S-diacylglycerol cysteine lipidation.

It belongs to the LolB family. As to quaternary structure, monomer.

Its subcellular location is the cell outer membrane. Its function is as follows. Plays a critical role in the incorporation of lipoproteins in the outer membrane after they are released by the LolA protein. The chain is Outer-membrane lipoprotein LolB from Halorhodospira halophila (strain DSM 244 / SL1) (Ectothiorhodospira halophila (strain DSM 244 / SL1)).